The sequence spans 121 residues: Large ribosomal subunit protein bL12 (121 aa).

Belongs to the bacterial ribosomal protein bL12 family. Homodimer. Part of the ribosomal stalk of the 50S ribosomal subunit. Forms a multimeric L10(L12)X complex, where L10 forms an elongated spine to which 2 to 4 L12 dimers bind in a sequential fashion. Binds GTP-bound translation factors.

Its function is as follows. Forms part of the ribosomal stalk which helps the ribosome interact with GTP-bound translation factors. Is thus essential for accurate translation. The protein is Large ribosomal subunit protein bL12 of Xanthomonas campestris pv. campestris (strain B100).